A 408-amino-acid polypeptide reads, in one-letter code: Indian hedgehog protein (408 aa).

The N-terminal stretch at 1–23 (MKPARLLLLLSGCALLLAPAVRC) is a signal peptide. Cys-24 carries the N-palmitoyl cysteine lipid modification. Residues Glu-90, Glu-91, Asp-96, Thr-126, Glu-127, Asp-130, and Asp-132 each coordinate Ca(2+). Residues His-141, Asp-148, and His-183 each coordinate Zn(2+). Residue Gly-198 is the site of Cholesterol glycine ester attachment.

The protein belongs to the hedgehog family. As to quaternary structure, multimer. In terms of assembly, interacts with BOC and CDON. Interacts with PTCH1. Interacts with glypican GPC3. In terms of processing, cholesterylation is required for N-product targeting to lipid rafts and multimerization. The C-terminal domain displays an autoproteolysis activity and a cholesterol transferase activity. Both activities result in the cleavage of the full-length protein and covalent attachment of a cholesterol moiety to the C-terminal of the newly generated N-product. The N-product is the active species in both local and long-range signaling, whereas the C-product is degraded in the endoplasmic reticulum. Post-translationally, N-palmitoylation by HHAT of N-product is required for indian hedgehog protein N-product multimerization and full activity. Expressed in developing midgut, lung and cartilage of developing long bones in the limb.

Its subcellular location is the cell membrane. The protein localises to the endoplasmic reticulum membrane. It localises to the golgi apparatus membrane. It is found in the secreted. The enzyme catalyses glycyl-L-cysteinyl-[protein] + cholesterol + H(+) = [protein]-C-terminal glycyl cholesterol ester + N-terminal L-cysteinyl-[protein]. Functionally, plays a role in embryonic morphogenesis; it is involved in the regulation of endochondral skeleton formation, and the development of retinal pigment epithelium (RPE), photoreceptors and periocular tissues. The C-terminal part of the indian hedgehog protein precursor displays an autoproteolysis and a cholesterol transferase activity. Both activities result in the cleavage of the full-length protein into two parts followed by the covalent attachment of a cholesterol moiety to the C-terminal of the newly generated N-product. Both activities occur in the endoplasmic reticulum. In terms of biological role, the dually lipidated indian hedgehog protein N-product is a morphogen which is essential for a variety of patterning events during development. Binds to the patched (PTCH1) receptor, which functions in association with smoothened (SMO), to activate the transcription of target genes. Plays a role in morphogenesis of the skeleton by coordinating growth and differentiation of the endochondral skeleton. Positively regulates PTHLH expression during endochondral bone formation preventing chondrocyte hypertrophy. In contrast, participates in normal chondrocyte proliferation in a PTHLH-independent pathway. The sequence is that of Indian hedgehog protein from Gallus gallus (Chicken).